Consider the following 1252-residue polypeptide: Immunoglobulin superfamily DCC subclass member 4 (1252 aa).

The signal sequence occupies residues 1–22 (MARADTGRGLLVLTFCLLSARG). Topologically, residues 23 to 956 (ELPLPQETTV…SDSLDVHAVT (934 aa)) are extracellular. Ig-like domains follow at residues 27–136 (PQET…VAVV), 142–228 (EDFS…ASLT), 241–329 (QDVV…AELR), and 334–420 (PAIS…APLA). Intrachain disulfides connect cysteine 55–cysteine 120 and cysteine 163–cysteine 211. Asparagine 88 carries an N-linked (GlcNAc...) asparagine glycan. Asparagine 251 carries an N-linked (GlcNAc...) asparagine glycan. Cystine bridges form between cysteine 264–cysteine 311 and cysteine 355–cysteine 404. 5 Fibronectin type-III domains span residues 430-524 (APTR…TLDD), 526-622 (PSAA…TPGV), 631-742 (APAE…TPDL), 751-844 (PPAH…TLPD), and 849-944 (PPSD…TLQK). The segment at 669–688 (TEEEADGDRPPGGRGDQAWD) is disordered. Residues 957 to 977 (GIIVGVCLGLLCLLACMCAGL) traverse the membrane as a helical segment. Over 978–1252 (RRSSHREALP…RAPVSSAQVP (275 aa)) the chain is Cytoplasmic. Threonine 994 bears the Phosphothreonine mark.

The protein belongs to the immunoglobulin superfamily. DCC family. In terms of tissue distribution, expressed in skeletal muscle, heart and brain. Brain expression is hippocampus-specific.

It localises to the cell membrane. In Mus musculus (Mouse), this protein is Immunoglobulin superfamily DCC subclass member 4 (Igdcc4).